The sequence spans 99 residues: Antitoxin VapB47 (99 aa).

Belongs to the phD/YefM antitoxin family.

Its function is as follows. Antitoxin component of a type II toxin-antitoxin (TA) system. This Mycobacterium tuberculosis (strain CDC 1551 / Oshkosh) protein is Antitoxin VapB47 (vapB47).